Here is a 529-residue protein sequence, read N- to C-terminus: MTRSPALLLLLLGALPSAEAARGPPRMADKVVPRQVARLGRTVRLQCPVEGDPPPLTMWTKDGRTIHSGWSRFRVLPQGLKVKEVEAEDAGVYVCKATNGFGSLSVNYTLIIMDDISPGKESPGPGGSSGGQEDPASQQWARPRFTQPSKMRRRVIARPVGSSVRLKCVASGHPRPDIMWMKDDQTLTHLEASEHRKKKWTLSLKNLKPEDSGKYTCRVSNKAGAINATYKVDVIQRTRSKPVLTGTHPVNTTVDFGGTTSFQCKVRSDVKPVIQWLKRVEYGSEGRHNSTIDVGGQKFVVLPTGDVWSRPDGSYLNKLLISRARQDDAGMYICLGANTMGYSFRSAFLTVLPDPKPPGPPMASSSSSTSLPWPVVIGIPAGAVFILGTVLLWLCQTKKKPCAPASTLPVPGHRPPGTSRERSGDKDLPSLAVGICEEHGSAMAPQHILASGSTAGPKLYPKLYTDVHTHTHTHTCTHTLSCGGQGSSTPACPLSVLNTANLQALCPEVGIWGPRQQVGRIENNGGRVS.

The signal sequence occupies residues 1 to 20; the sequence is MTRSPALLLLLLGALPSAEA. Residues 21 to 374 lie on the Extracellular side of the membrane; the sequence is ARGPPRMADK…SSSSTSLPWP (354 aa). Ig-like C2-type domains follow at residues 25–111, 143–233, and 242–350; these read PRMA…YTLI, PRFT…YKVD, and PVLT…AFLT. C47 and C95 are joined by a disulfide. Residue N107 is glycosylated (N-linked (GlcNAc...) asparagine). Positions 116–151 are disordered; sequence ISPGKESPGPGGSSGGQEDPASQQWARPRFTQPSKM. Cysteines 168 and 217 form a disulfide. N-linked (GlcNAc...) asparagine glycans are attached at residues N227, N251, and N289. The cysteines at positions 264 and 334 are disulfide-linked. The helical transmembrane segment at 375–395 threads the bilayer; sequence VVIGIPAGAVFILGTVLLWLC. Over 396–529 the chain is Cytoplasmic; sequence QTKKKPCAPA…RIENNGGRVS (134 aa). The interval 405–427 is disordered; that stretch reads ASTLPVPGHRPPGTSRERSGDKD.

Interacts with FGF2 with a low affinity. As to expression, highly expressed in the kidney, brain and lung. Weakly expressed in the muscle, thymus, lymph node, stomach, intestine, colon and liver. Expressed in fetal cartilaginous structures like the nasal cartilage, the ribs and the sternum as well as in the cartilaginous rudiments of developing bones such as the vertebrae and the pelvic bone. High expression is found in the muscles of the tongue and the diaphragm.

The protein resides in the cell membrane. Functionally, has a negative effect on cell proliferation. This is Fibroblast growth factor receptor-like 1 (Fgfrl1) from Mus musculus (Mouse).